The primary structure comprises 355 residues: Uroporphyrinogen decarboxylase (355 aa).

Substrate-binding positions include 27 to 31 (RQAGR), D77, Y154, T209, and H327.

Belongs to the uroporphyrinogen decarboxylase family. Homodimer.

The protein resides in the cytoplasm. It catalyses the reaction uroporphyrinogen III + 4 H(+) = coproporphyrinogen III + 4 CO2. Its pathway is porphyrin-containing compound metabolism; protoporphyrin-IX biosynthesis; coproporphyrinogen-III from 5-aminolevulinate: step 4/4. Catalyzes the decarboxylation of four acetate groups of uroporphyrinogen-III to yield coproporphyrinogen-III. The protein is Uroporphyrinogen decarboxylase of Yersinia pseudotuberculosis serotype O:1b (strain IP 31758).